Reading from the N-terminus, the 887-residue chain is Cadherin-1 (887 aa).

The signal sequence occupies residues 1–26; that stretch reads MGRRWGSPALQRFPVLVLLLLLQVCG. The propeptide occupies 27-160; it reads RRCDEAAPCQ…DPGFLRRQKR (134 aa). Cadherin domains lie at 161 to 268, 269 to 381, 382 to 493, 494 to 599, and 600 to 704; these read DWVI…KPVF, IKEV…IPIF, NPTM…PPVF, VPPI…DNGP, and TPEP…RRSY. The Extracellular segment spans residues 161–714; that stretch reads DWVIPPISCL…IVGGLGVPAI (554 aa). Aspartate 263 contacts Ca(2+). Asparagine 291 is a glycosylation site (N-linked (GlcNAc...) asparagine). Aspartate 294 provides a ligand contact to Ca(2+). An N-linked (GlcNAc...) asparagine glycan is attached at asparagine 346. N-linked (GlcNAc...) asparagine glycans are attached at residues asparagine 564 and asparagine 643. A helical membrane pass occupies residues 715-735; the sequence is LGILGGILALLILLLLLLLFA. Over 736 to 887 the chain is Cytoplasmic; sequence RRRKVEKEPL…ELYGGGEDDE (152 aa). The segment at 745 to 770 is disordered; that stretch reads LLPPEDDMRDNVYNYDEEGGGEEDQD. Acidic residues predominate over residues 759-770; the sequence is YDEEGGGEEDQD.

Homodimer. Interacts with CTNNA2. In terms of tissue distribution, expressed in the liver.

The protein localises to the cell junction. It localises to the adherens junction. It is found in the cell membrane. Its subcellular location is the endosome. The protein resides in the golgi apparatus. The protein localises to the trans-Golgi network. It localises to the cytoplasm. It is found in the desmosome. In terms of biological role, cadherins are calcium-dependent cell adhesion proteins. They preferentially interact with themselves in a homophilic manner in connecting cells; cadherins may thus contribute to the sorting of heterogeneous cell types. Promotes organization of radial actin fiber structure and cellular response to contractile forces, via anchoring of radial actin fibers to CDH1 junction complexes at the cell membrane. E-cadherin is a ligand for integrin alpha-E/beta-7. This Gallus gallus (Chicken) protein is Cadherin-1 (CDH1).